A 192-amino-acid chain; its full sequence is Nucleoside triphosphate pyrophosphatase (192 aa).

Asp73 (proton acceptor) is an active-site residue.

The protein belongs to the Maf family. It depends on a divalent metal cation as a cofactor.

The protein resides in the cytoplasm. The enzyme catalyses a ribonucleoside 5'-triphosphate + H2O = a ribonucleoside 5'-phosphate + diphosphate + H(+). It catalyses the reaction a 2'-deoxyribonucleoside 5'-triphosphate + H2O = a 2'-deoxyribonucleoside 5'-phosphate + diphosphate + H(+). Functionally, nucleoside triphosphate pyrophosphatase. May have a dual role in cell division arrest and in preventing the incorporation of modified nucleotides into cellular nucleic acids. The polypeptide is Nucleoside triphosphate pyrophosphatase (Ehrlichia ruminantium (strain Welgevonden)).